Consider the following 899-residue polypeptide: U3 small nucleolar RNA-associated protein 14 (899 aa).

Residues 1-14 (MAKKKSKSRSKSSR) are compositionally biased toward basic residues. The disordered stretch occupies residues 1 to 197 (MAKKKSKSRS…ISEDEEDIEL (197 aa)). A phosphoserine mark is found at serine 34 and serine 35. The span at 36–45 (DNDKRHDARR) shows a compositional bias: basic and acidic residues. Composition is skewed to acidic residues over residues 61–90 (NSDE…DDYD) and 110–126 (QEEE…EEDL). Phosphoserine is present on serine 151. The segment covering 167 to 196 (SSEESESESEDDEEEEDPFDEISEDEEDIE) has biased composition (acidic residues). ATP is bound at residue 260 to 267 (ANLLKGKS). Phosphoserine occurs at positions 423, 424, 488, 500, and 562. Disordered stretches follow at residues 485 to 509 (DRNS…EKEN) and 559 to 721 (LFES…DLLL). Positions 588–615 (SNKDMNELNDHTRKENKVDESRSLENRL) are enriched in basic and acidic residues. A compositionally biased stretch (polar residues) spans 619–628 (NSGQSKNART). At serine 668 the chain carries Phosphoserine. Positions 683–704 (VIDKDSSKNVKAMNKMEKAELK) are enriched in basic and acidic residues. A Phosphoserine modification is found at serine 738. The interval 776 to 805 (IDDEDDKEVDTTLPGWGEWAGAGSKPKNKK) is disordered.

It belongs to the UTP14 family. As to quaternary structure, interacts with snoRNA U3. Interacts with MPP10. Component of the ribosomal small subunit (SSU) processome composed of at least 40 protein subunits and snoRNA U3.

The protein resides in the nucleus. It localises to the nucleolus. In terms of biological role, involved in nucleolar processing of pre-18S ribosomal RNA. In Saccharomyces cerevisiae (strain ATCC 204508 / S288c) (Baker's yeast), this protein is U3 small nucleolar RNA-associated protein 14 (UTP14).